Reading from the N-terminus, the 93-residue chain is Cell division protein CrgA (93 aa).

Transmembrane regions (helical) follow at residues 31–51 (VWFV…LMVF) and 70–90 (LGPW…LLTM).

It belongs to the CrgA family.

Its subcellular location is the cell membrane. Involved in cell division. The chain is Cell division protein CrgA from Mycobacterium avium (strain 104).